We begin with the raw amino-acid sequence, 379 residues long: Queuine tRNA-ribosyltransferase (379 aa).

Catalysis depends on Asp94, which acts as the Proton acceptor. Residues 94–98 (DSGGF), Asp148, Gln191, and Gly218 each bind substrate. The interval 249 to 255 (GVGSPDA) is RNA binding. Asp268 (nucleophile) is an active-site residue. Positions 273–277 (TRIAR) are RNA binding; important for wobble base 34 recognition. Cys306, Cys308, Cys311, and His337 together coordinate Zn(2+).

This sequence belongs to the queuine tRNA-ribosyltransferase family. Homodimer. Within each dimer, one monomer is responsible for RNA recognition and catalysis, while the other monomer binds to the replacement base PreQ1. It depends on Zn(2+) as a cofactor.

It catalyses the reaction 7-aminomethyl-7-carbaguanine + guanosine(34) in tRNA = 7-aminomethyl-7-carbaguanosine(34) in tRNA + guanine. The protein operates within tRNA modification; tRNA-queuosine biosynthesis. Catalyzes the base-exchange of a guanine (G) residue with the queuine precursor 7-aminomethyl-7-deazaguanine (PreQ1) at position 34 (anticodon wobble position) in tRNAs with GU(N) anticodons (tRNA-Asp, -Asn, -His and -Tyr). Catalysis occurs through a double-displacement mechanism. The nucleophile active site attacks the C1' of nucleotide 34 to detach the guanine base from the RNA, forming a covalent enzyme-RNA intermediate. The proton acceptor active site deprotonates the incoming PreQ1, allowing a nucleophilic attack on the C1' of the ribose to form the product. After dissociation, two additional enzymatic reactions on the tRNA convert PreQ1 to queuine (Q), resulting in the hypermodified nucleoside queuosine (7-(((4,5-cis-dihydroxy-2-cyclopenten-1-yl)amino)methyl)-7-deazaguanosine). In Macrococcus caseolyticus (strain JCSC5402) (Macrococcoides caseolyticum), this protein is Queuine tRNA-ribosyltransferase.